A 556-amino-acid polypeptide reads, in one-letter code: Endoplasmic reticulum membrane protein 65 (556 aa).

At 1–87 the chain is on the cytoplasmic side; sequence MQHKDTAVAK…IRIPMFLEKF (87 aa). A Phosphoserine modification is found at Ser-22. The helical transmembrane segment at 88 to 108 threads the bilayer; sequence MLFALLTSLDCFLYYFTVLPI. At 109 to 151 the chain is on the lumenal side; sequence RLIKGYVKQFKSYRQHYRLQQRSGHKNKIPFRYRITSREYKER. The chain crosses the membrane as a helical span at residues 152 to 172; sequence CMIFIIVISSILLSKLDTSKL. The Cytoplasmic portion of the chain corresponds to 173–224; it reads YHRIKRQSTMKLYMLFSVLEMADKMLASLGQSLLTVMLSRKNSERILLHKCL. A helical transmembrane segment spans residues 225–245; it reads LVSMSLTYVTIHGYVLVYQAI. Over 246–330 the chain is Lumenal; the sequence is SLNIAVNSYS…INFWSPRSTL (85 aa). N-linked (GlcNAc...) asparagine glycosylation is present at Asn-318. Residues 331–351 traverse the membrane as a helical segment; the sequence is SIVINILCGPMVSVVGSEVLV. The Cytoplasmic segment spans residues 352 to 391; sequence DWAKHAYITKFNRIRPQIYDKFYYIIYKDYSTRTHKLEDR. Residues 392–412 traverse the membrane as a helical segment; it reads LGLPLPAFVVLFIVMVRPTLF. The Lumenal segment spans residues 413–428; that stretch reads KSSEPSYLPSLFRILF. The chain crosses the membrane as a helical span at residues 429 to 449; that stretch reads MGASVFLLALLAKFTLDLILI. Topologically, residues 450 to 556 are cytoplasmic; the sequence is KWSKRIEQRF…RYKMVSKRIW (107 aa).

Belongs to the TAPT1 family. In terms of assembly, interacts with SLP1.

It localises to the endoplasmic reticulum membrane. It is found in the mitochondrion. In terms of biological role, may be involved in membrane protein folding. In Saccharomyces cerevisiae (strain ATCC 204508 / S288c) (Baker's yeast), this protein is Endoplasmic reticulum membrane protein 65.